The sequence spans 335 residues: Glucan endo-1,3-beta-glucosidase, acidic isoform (335 aa).

The first 29 residues, Met1–Ser29, serve as a signal peptide directing secretion. The Proton donor role is filled by Glu122. Glu259 acts as the Nucleophile in catalysis.

This sequence belongs to the glycosyl hydrolase 17 family. In terms of tissue distribution, accumulates in aleurone layers. Much lower levels are found in the embryo, and none in starchy endosperm.

Its subcellular location is the secreted. The protein localises to the extracellular space. It carries out the reaction Hydrolysis of (1-&gt;3)-beta-D-glucosidic linkages in (1-&gt;3)-beta-D-glucans.. Is thought to be an important plant defense-related product against fungal pathogens. In Zea mays (Maize), this protein is Glucan endo-1,3-beta-glucosidase, acidic isoform.